Consider the following 498-residue polypeptide: Glycerol kinase (498 aa).

ADP is bound at residue threonine 12. 3 residues coordinate ATP: threonine 12, threonine 13, and serine 14. Threonine 12 is a sn-glycerol 3-phosphate binding site. ADP is bound at residue arginine 16. Residues arginine 82, glutamate 83, tyrosine 134, and aspartate 243 each contribute to the sn-glycerol 3-phosphate site. The glycerol site is built by arginine 82, glutamate 83, tyrosine 134, aspartate 243, and glutamine 244. 2 residues coordinate ADP: threonine 265 and glycine 308. ATP-binding residues include threonine 265, glycine 308, glutamine 312, and glycine 409. ADP-binding residues include glycine 409 and asparagine 413.

This sequence belongs to the FGGY kinase family.

The catalysed reaction is glycerol + ATP = sn-glycerol 3-phosphate + ADP + H(+). It functions in the pathway polyol metabolism; glycerol degradation via glycerol kinase pathway; sn-glycerol 3-phosphate from glycerol: step 1/1. Inhibited by fructose 1,6-bisphosphate (FBP). Its function is as follows. Key enzyme in the regulation of glycerol uptake and metabolism. Catalyzes the phosphorylation of glycerol to yield sn-glycerol 3-phosphate. This is Glycerol kinase from Petrotoga mobilis (strain DSM 10674 / SJ95).